We begin with the raw amino-acid sequence, 418 residues long: AP-3 complex subunit mu-1 (418 aa).

Positions 176–417 (NNEAYFDVIE…ITKAGKFQVR (242 aa)) constitute an MHD domain.

The protein belongs to the adaptor complexes medium subunit family. The AP-3 complex associates with the BLOC-1 complex.

It is found in the golgi apparatus. The protein localises to the cytoplasmic vesicle membrane. Part of the AP-3 complex, an adaptor-related complex which is not clathrin-associated. The complex is associated with the Golgi region as well as more peripheral structures. It facilitates the budding of vesicles from the Golgi membrane and may be directly involved in trafficking to lysosomes. In concert with the BLOC-1 complex, AP-3 is required to target cargos into vesicles assembled at cell bodies for delivery into neurites and nerve terminals. This is AP-3 complex subunit mu-1 (AP3M1) from Gallus gallus (Chicken).